The chain runs to 122 residues: Large ribosomal subunit protein uL18 (122 aa).

Belongs to the universal ribosomal protein uL18 family. In terms of assembly, part of the 50S ribosomal subunit; part of the 5S rRNA/L5/L18/L25 subcomplex. Contacts the 5S and 23S rRNAs.

Its function is as follows. This is one of the proteins that bind and probably mediate the attachment of the 5S RNA into the large ribosomal subunit, where it forms part of the central protuberance. The polypeptide is Large ribosomal subunit protein uL18 (Geotalea uraniireducens (strain Rf4) (Geobacter uraniireducens)).